Consider the following 403-residue polypeptide: Phosphoglycerate kinase (403 aa).

Substrate is bound by residues 22 to 24 (DLN), R37, 60 to 63 (HLGR), R119, and R156. Residues K206, G302, E333, and 359 to 362 (GGDS) each bind ATP.

This sequence belongs to the phosphoglycerate kinase family. Monomer.

It is found in the cytoplasm. The enzyme catalyses (2R)-3-phosphoglycerate + ATP = (2R)-3-phospho-glyceroyl phosphate + ADP. Its pathway is carbohydrate degradation; glycolysis; pyruvate from D-glyceraldehyde 3-phosphate: step 2/5. The chain is Phosphoglycerate kinase from Leifsonia xyli subsp. xyli (strain CTCB07).